The primary structure comprises 509 residues: Ribonuclease Y (509 aa).

Residues 5 to 25 traverse the membrane as a helical segment; it reads IIILLSVFCGIFFICFIICSS. Residues 199–259 form the KH domain; it reads TTNIVKLPSD…IRREIATRTL (61 aa). The HD domain maps to 325–418; the sequence is VLAHSIEVAK…VAIADSISAS (94 aa).

It belongs to the RNase Y family.

The protein resides in the cell membrane. In terms of biological role, endoribonuclease that initiates mRNA decay. The sequence is that of Ribonuclease Y from Mycoplasma capricolum subsp. capricolum (strain California kid / ATCC 27343 / NCTC 10154).